The following is a 24-amino-acid chain: Humanin-like 6 (24 aa).

The protein belongs to the humanin family. In terms of tissue distribution, expressed in skeletal muscle and testis.

Its subcellular location is the secreted. It is found in the cytoplasm. Its function is as follows. Plays a role as a neuroprotective and antiapoptotic factor. This Homo sapiens (Human) protein is Humanin-like 6.